Consider the following 130-residue polypeptide: Methylglyoxal synthase (130 aa).

An MGS-like domain is found at 1–130 (MSKPRIALIA…DLARNMQDVC (130 aa)). Residues H11, K15, 37 to 40 (TGTT), and 57 to 58 (SG) each bind substrate. D63 serves as the catalytic Proton donor/acceptor. H90 is a substrate binding site.

Belongs to the methylglyoxal synthase family.

It catalyses the reaction dihydroxyacetone phosphate = methylglyoxal + phosphate. In terms of biological role, catalyzes the formation of methylglyoxal from dihydroxyacetone phosphate. This chain is Methylglyoxal synthase, found in Burkholderia ambifaria (strain MC40-6).